The chain runs to 133 residues: MMLNSDTMELDLPPTHSETESGFSDCGGGAGPDGAGPGGPGGGQARGPEPGEPGRKDLQHLSREERRRRRRATAKYRTAHATRERIRVEAFNLAFAELRKLLPTLPPDKKLSKIEILRLAICYISYLNHVLDV.

The interval 1–79 (MMLNSDTMEL…RRATAKYRTA (79 aa)) is disordered. The segment covering 25 to 45 (DCGGGAGPDGAGPGGPGGGQA) has biased composition (gly residues). Residues 52–65 (EPGRKDLQHLSREE) show a composition bias toward basic and acidic residues. Residues 66-79 (RRRRRRATAKYRTA) are compositionally biased toward basic residues. Residues 75–127 (KYRTAHATRERIRVEAFNLAFAELRKLLPTLPPDKKLSKIEILRLAICYISYL) form the bHLH domain.

As to quaternary structure, efficient DNA binding requires dimerization with another bHLH protein.

Its subcellular location is the nucleus. Functionally, may serve as DNA-binding protein and may be involved in the control of cell-type determination, possibly within the developing nervous system. The chain is Helix-loop-helix protein 1 (NHLH1) from Homo sapiens (Human).